Consider the following 709-residue polypeptide: Ral guanine nucleotide dissociation stimulator-like 3 (709 aa).

Residues 26-55 (VYSVSLRRQRSQRSTPERSGEGQTPIPATD) form a disordered region. The 138-residue stretch at 64–201 (KVRALRAARL…LLEDFLKEAK (138 aa)) folds into the N-terminal Ras-GEF domain. Disordered regions lie at residues 203-225 (EQTE…TPGS), 395-416 (SQEE…KLPP), and 502-604 (PPAA…SRVP). The Ras-GEF domain maps to 248–503 (SVDDVAEQLT…YRVSRVIEPP (256 aa)). 2 stretches are compositionally biased toward low complexity: residues 502-511 (PPAASCPSSP) and 533-551 (SSPG…SVSP). A phosphoserine mark is found at Ser-506 and Ser-510. Pro residues predominate over residues 552 to 576 (GSPPSSPRNREPPPPGSPPASPGPQ). 5 positions are modified to phosphoserine: Ser-553, Ser-568, Ser-572, Ser-577, and Ser-600. The tract at residues 611–706 (SEARVIRVSI…KEGTGHTLSA (96 aa)) is interaction with HRAS, MRAS and RIT1. The Ras-associating domain occupies 612-699 (EARVIRVSIN…GDFLLRRKEG (88 aa)).

As to quaternary structure, interacts with GTP-bound forms of RIT1, HRAS and MRAS. As to expression, widely expressed. Expressed at high levels in the liver and kidney.

Its function is as follows. Guanine nucleotide exchange factor (GEF) for Ral-A. Potential effector of GTPase HRas and Ras-related protein M-Ras. Negatively regulates Elk-1-dependent gene induction downstream of HRas and MEKK1. This chain is Ral guanine nucleotide dissociation stimulator-like 3 (Rgl3), found in Mus musculus (Mouse).